Here is a 1343-residue protein sequence, read N- to C-terminus: Kinesin-like protein KIF7 (1343 aa).

The 335-residue stretch at 15 to 349 (PVRVALRVRP…LNYASRAQNI (335 aa)) folds into the Kinesin motor domain. ATP is bound at residue 94-101 (GQTGSGKT). Disordered regions lie at residues 356-382 (NWRP…RSET), 451-483 (RSAL…RKED), and 611-639 (EVNR…TLHL). Residues 358-479 (RPEAERPPEE…EDQAAQGAGG (122 aa)) form an interaction with DLG5 region. An interaction with SMO region spans residues 358–1206 (RPEAERPPEE…LGRYMWINQE (849 aa)). Residues 480-542 (RKEDEGAQQL…ELRLRLELVR (63 aa)) adopt a coiled-coil conformation. The segment at 513-775 (AMEQYKLQSD…LRELEGKELQ (263 aa)) is sufficient for interaction with NPHP1. Coiled coils occupy residues 698–1057 (ASEW…AAIE) and 1109–1211 (TLRE…KQKL). At Ser898 the chain carries Phosphoserine. Disordered stretches follow at residues 1219 to 1238 (HSRG…APGN) and 1310 to 1343 (GEAG…KNPL).

This sequence belongs to the TRAFAC class myosin-kinesin ATPase superfamily. Kinesin family. KIF27 subfamily. As to quaternary structure, can form homodimers and interacts with microtubules. Interacts with GLI1, GLI2, GLI3, SMO and SUFU. Interacts with NPHP1. Interacts with SMO and DLG5 (via PDZ4 or guanylate kinase-like domain). Polyubiquitinated by UBR3. In terms of tissue distribution, embryonic stem cells, melanotic melanoma and Jurkat T-cells. Expressed in heart, lung, liver, kidney, testis, retina, placenta, pancreas, colon, small intestin, prostate and thymus.

It localises to the cell projection. Its subcellular location is the cilium. The protein localises to the cytoplasm. The protein resides in the cytoskeleton. It is found in the cilium basal body. Functionally, essential for hedgehog signaling regulation: acts both as a negative and positive regulator of sonic hedgehog (Shh) and Indian hedgehog (Ihh) pathways, acting downstream of SMO, through both SUFU-dependent and -independent mechanisms. Involved in the regulation of microtubular dynamics. Required for proper organization of the ciliary tip and control of ciliary localization of SUFU-GLI2 complexes. Required for localization of GLI3 to cilia in response to Shh. Negatively regulates Shh signaling by preventing inappropriate activation of the transcriptional activator GLI2 in the absence of ligand. Positively regulates Shh signaling by preventing the processing of the transcription factor GLI3 into its repressor form. In keratinocytes, promotes the dissociation of SUFU-GLI2 complexes, GLI2 nuclear translocation and Shh signaling activation. Involved in the regulation of epidermal differentiation and chondrocyte development. The polypeptide is Kinesin-like protein KIF7 (KIF7) (Homo sapiens (Human)).